We begin with the raw amino-acid sequence, 525 residues long: Ubiquitin carboxyl-terminal hydrolase 22 (525 aa).

A UBP-type zinc finger spans residues 21–138; it reads PGCSHLGSFK…KEEQRKAWKM (118 aa). Zn(2+)-binding residues include C23, H25, C63, C66, C76, C79, C84, H89, H93, H99, C112, and C115. Residue K129 is modified to N6-acetyllysine. T147 is subject to Phosphothreonine. Positions 176-520 constitute a USP domain; the sequence is RGLINLGNTC…EGYLLFYHKQ (345 aa). C185 serves as the catalytic Nucleophile. S237 carries the phosphoserine modification. Residue H479 is the Proton acceptor of the active site.

The protein belongs to the peptidase C19 family. UBP8 subfamily. Component of some SAGA transcription coactivator-HAT complexes, at least composed of ATXN7, ATXN7L3, ENY2, GCN5L2, SUPT3H, TAF10, TRRAP and USP22. Within the SAGA complex, ATXN7L3, ENY2 and USP22 form a subcomplex required for histone deubiquitination. Interacts directly with ATXN7L3; leading to its recruitment to the SAGA complex. Interacts with ATXN7L3 and weakly with ATXN7L3B. Interacts with MED1. In terms of processing, phosphorylated in G2/M phase, but not in G1 phase by CDK1. Ubiquitinated and subsequently degraded in a CDC20-dependent manner. In terms of tissue distribution, highly expressed in brain and weakly in other organs.

The protein resides in the nucleus. It is found in the cytoplasm. It catalyses the reaction Thiol-dependent hydrolysis of ester, thioester, amide, peptide and isopeptide bonds formed by the C-terminal Gly of ubiquitin (a 76-residue protein attached to proteins as an intracellular targeting signal).. Functionally, deubiquitinase that plays a role in several cellular processes including transcriptional regulation, cell cycle progression or innate immunity. As part of the transcription regulatory histone acetylation (HAT) complex SAGA, catalyzes the deubiquitination of both histones H2A and H2B, thereby acting as a transcriptional coactivator. Recruited to specific gene promoters by activators such as MYC, where it is required for transcription. Facilitates cell-cycle progression by stabilizing CCNB1 and antagonizing its proteasome-mediated degradation in a cell cycle-specific manner. Modulates cell cycle progression and apoptosis also by antagonizing TP53 transcriptional activation through deacetylase SIRT1 stabilization. Plays multiple roles in immunity and inflammation. Participates in antiviral response by deubiquitinating the importin KPNA2, leading to IRF3 nuclear translocation and subsequent type I interferon production. Acts as a central regulator of type III IFN signaling by negatively regulating STING1 activation and ubiquitination. Inhibits NLRP3 inflammasome activation by promoting NLRP3 degradation through ATG5-dependent autophagy. Deubiquitinates CD274 to induce its stabilization and thereby participates in maintenance of immune tolerance to self. Controls necroptotic cell death by regulating RIPK3 phosphorylation and ubiquitination. During bacterial infection, promotes pro-inflammatory response by targeting TRAF6 and removing its 'Lys-48'-linked polyubiquitination. The polypeptide is Ubiquitin carboxyl-terminal hydrolase 22 (Usp22) (Mus musculus (Mouse)).